A 324-amino-acid polypeptide reads, in one-letter code: MTKSIFEYKDDQDWYLASFGSYNHLTCFGDDEAYEQYVDFFQGLTSTLDVSGFQLHVVKHSSDLRLVSFILDCLKEELGRDLVVTQHQGTLLVSEGDKLLYVHVPREGVSLDDFFGSDNKSDFGDVLLIATRNEGKTKEFRKLFGKLGIKVENLNDYPDLPEVAETGMTFEENARLKAETISKLTGKMVLSDDSGLQVDVLGGLPGVWSARFAGPEATDAENNAKLLHELAMVLDDSKRSAQFHTTLVVAAPGRDSLVVDADWKGYIGREPKGDNGFGYDPLFLVGNTGRTAAELSTEEKNEQSHRGQAVKKLMEVFPAWQNKQ.

Residues 1-126 form a unknown region; that stretch reads MTKSIFEYKD…SDNKSDFGDV (126 aa). Residues 127–324 are NTP pyrophosphatase; the sequence is LLIATRNEGK…EVFPAWQNKQ (198 aa). Residue 131–136 coordinates substrate; it reads TRNEGK. Residue Asp-193 is the Proton acceptor of the active site. A Mg(2+)-binding site is contributed by Asp-193. Substrate contacts are provided by residues Ser-194, 277 to 280, Lys-300, and 305 to 306; these read FGYD and HR.

It belongs to the HAM1 NTPase family. Homodimer. The cofactor is Mg(2+).

It catalyses the reaction XTP + H2O = XMP + diphosphate + H(+). It carries out the reaction dITP + H2O = dIMP + diphosphate + H(+). The catalysed reaction is ITP + H2O = IMP + diphosphate + H(+). In terms of biological role, pyrophosphatase that catalyzes the hydrolysis of nucleoside triphosphates to their monophosphate derivatives, with a high preference for the non-canonical purine nucleotides XTP (xanthosine triphosphate), dITP (deoxyinosine triphosphate) and ITP. Seems to function as a house-cleaning enzyme that removes non-canonical purine nucleotides from the nucleotide pool, thus preventing their incorporation into DNA/RNA and avoiding chromosomal lesions. The sequence is that of dITP/XTP pyrophosphatase from Streptococcus thermophilus (strain ATCC BAA-250 / LMG 18311).